The following is a 337-amino-acid chain: Glyceraldehyde-3-phosphate dehydrogenase (337 aa).

Residues R12–I13, D34, and K79 contribute to the NAD(+) site. D-glyceraldehyde 3-phosphate is bound by residues S150–T152, T181, T210–G211, and R233. C151 (nucleophile) is an active-site residue. An NAD(+)-binding site is contributed by N315.

Belongs to the glyceraldehyde-3-phosphate dehydrogenase family. In terms of assembly, homotetramer.

The protein localises to the cytoplasm. The enzyme catalyses D-glyceraldehyde 3-phosphate + phosphate + NAD(+) = (2R)-3-phospho-glyceroyl phosphate + NADH + H(+). Its pathway is carbohydrate degradation; glycolysis; pyruvate from D-glyceraldehyde 3-phosphate: step 1/5. The sequence is that of Glyceraldehyde-3-phosphate dehydrogenase (GPD) from Schizophyllum commune (Split gill fungus).